An 874-amino-acid chain; its full sequence is Translation initiation factor IF-2 (874 aa).

The segment at 1-289 is disordered; the sequence is MKIKNAQLTK…KHYDEHSVQR (289 aa). Residues 31–48 are compositionally biased toward basic and acidic residues; it reads SSSEKPTTKVPEKVAKEK. A compositionally biased stretch (polar residues) spans 81 to 104; that stretch reads RSSFASEDSTIPSPVSVDTESTAF. Positions 105-118 are enriched in low complexity; sequence SPPVVEEVVSPLES. Basic and acidic residues-rich tracts occupy residues 144–158 and 186–198; these read PPKK…KEPP and PKKE…KERT. Residues 199–211 are compositionally biased toward polar residues; it reads GTVQTKPQQSSEV. A compositionally biased stretch (basic and acidic residues) spans 228-260; that stretch reads YRRDTSKRPGSDFRDRSKKDDSPKAFTGRDRYG. The segment covering 271-280 has biased composition (basic residues); sequence RKKRVQKTKK. Positions 380–549 constitute a tr-type G domain; it reads IRPPIVAFMG…ALQAEVLELK (170 aa). The G1 stretch occupies residues 389–396; that stretch reads GHVDHGKT. 389-396 contacts GTP; sequence GHVDHGKT. The interval 414 to 418 is G2; the sequence is AITQH. The tract at residues 435–438 is G3; that stretch reads DTPG. Residues 435–439 and 489–492 contribute to the GTP site; these read DTPGH and NKCD. The tract at residues 489-492 is G4; that stretch reads NKCD. Residues 525–527 form a G5 region; the sequence is SAK.

Belongs to the TRAFAC class translation factor GTPase superfamily. Classic translation factor GTPase family. IF-2 subfamily.

It localises to the cytoplasm. In terms of biological role, one of the essential components for the initiation of protein synthesis. Protects formylmethionyl-tRNA from spontaneous hydrolysis and promotes its binding to the 30S ribosomal subunits. Also involved in the hydrolysis of GTP during the formation of the 70S ribosomal complex. The polypeptide is Translation initiation factor IF-2 (Chlamydia abortus (strain DSM 27085 / S26/3) (Chlamydophila abortus)).